A 535-amino-acid chain; its full sequence is BAR/IMD domain-containing adapter protein 2 (535 aa).

An IMD domain is found at 1 to 250 (MSLSRSEEMH…VQLMQQMANS (250 aa)). The stretch at 88-153 (NQLEETLKSF…LRKKSQGSKN (66 aa)) forms a coiled coil. Ser262, Ser324, Ser326, and Ser337 each carry phosphoserine. The disordered stretch occupies residues 299-370 (VMNGVAGPDS…TLPRSSSMAA (72 aa)). Positions 321–335 (QPKSLSPPQSQSKLS) are enriched in low complexity. Phosphothreonine is present on Thr341. Ser347 carries the phosphoserine modification. Residues 349 to 368 (TPKNSYATTENKTLPRSSSM) show a composition bias toward polar residues. Thr361 bears the Phosphothreonine mark. Phosphoserine occurs at positions 367, 385, 396, and 455. In terms of domain architecture, SH3 spans 375–438 (NGRMRVKAIF…PFSYTRVLDS (64 aa)). The interval 445–477 (HMSLQQGKSSSTGNLLDKDDLALPPPDYGTSSR) is disordered. Polar residues predominate over residues 447 to 458 (SLQQGKSSSTGN).

As to quaternary structure, homodimer. Interacts with CDC42 and RAC1 that have been activated by GTP binding. Binds DIAPH1. Interacts with ATN1, ADGRB1, SHANK1, SHANK2, SHANK3, TIAM1, WASF1 and WASF2. Interacts with ENAH after recruitment of CDC42. Interacts with EPS8. Phosphorylated on tyrosine residues by INSR in response to insulin treatment. As to expression, detected in liver, brain, olfactory bulb, brain cortex, caudate putamen, hypothalamus and cerebellum.

The protein resides in the cytoplasm. The protein localises to the membrane. It is found in the cell projection. Its subcellular location is the filopodium. It localises to the ruffle. The protein resides in the cytoskeleton. Adapter protein that links membrane-bound small G-proteins to cytoplasmic effector proteins. Necessary for CDC42-mediated reorganization of the actin cytoskeleton and for RAC1-mediated membrane ruffling. Involved in the regulation of the actin cytoskeleton by WASF family members and the Arp2/3 complex. Plays a role in neurite growth. Acts syngeristically with ENAH to promote filipodia formation. Plays a role in the reorganization of the actin cytoskeleton in response to bacterial infection. Participates in actin bundling when associated with EPS8, promoting filopodial protrusions. The sequence is that of BAR/IMD domain-containing adapter protein 2 (Baiap2) from Mus musculus (Mouse).